The primary structure comprises 368 residues: UDP-N-acetylglucosamine--N-acetylmuramyl-(pentapeptide) pyrophosphoryl-undecaprenol N-acetylglucosamine transferase (368 aa).

UDP-N-acetyl-alpha-D-glucosamine contacts are provided by residues 11–13 (TGG), Asn123, Arg164, Ser188, Ile250, and Gln295.

This sequence belongs to the glycosyltransferase 28 family. MurG subfamily.

The protein localises to the cell inner membrane. The enzyme catalyses di-trans,octa-cis-undecaprenyl diphospho-N-acetyl-alpha-D-muramoyl-L-alanyl-D-glutamyl-meso-2,6-diaminopimeloyl-D-alanyl-D-alanine + UDP-N-acetyl-alpha-D-glucosamine = di-trans,octa-cis-undecaprenyl diphospho-[N-acetyl-alpha-D-glucosaminyl-(1-&gt;4)]-N-acetyl-alpha-D-muramoyl-L-alanyl-D-glutamyl-meso-2,6-diaminopimeloyl-D-alanyl-D-alanine + UDP + H(+). Its pathway is cell wall biogenesis; peptidoglycan biosynthesis. In terms of biological role, cell wall formation. Catalyzes the transfer of a GlcNAc subunit on undecaprenyl-pyrophosphoryl-MurNAc-pentapeptide (lipid intermediate I) to form undecaprenyl-pyrophosphoryl-MurNAc-(pentapeptide)GlcNAc (lipid intermediate II). In Solidesulfovibrio magneticus (strain ATCC 700980 / DSM 13731 / RS-1) (Desulfovibrio magneticus), this protein is UDP-N-acetylglucosamine--N-acetylmuramyl-(pentapeptide) pyrophosphoryl-undecaprenol N-acetylglucosamine transferase.